The following is a 336-amino-acid chain: MFARQVIRPARQLQQHVRRYASEAPQSGGSSNGALYVGIGAAGLAGAYIYMRGGKPAAPLSEEANKVAAKVGGASKKAFTGGDQGFISLLLDKSEVVNHNTKKLTFKLPEPDMESGLPVTSAVITKYKGPEMEKPVIRPYTPVSDVDQQGTVDFIVKKYEKGPMSSHMHNMEPGQRLDIKGPIPKYPWSPNKHEHIALIAGGTGITPMWQTARAIFKNPEDKTKVTLVFGNISEEDILLKKEWEHLENTYPQRFRAFYVLDNPPESWQGGKGFITKELLKTVLPEPKEGEKVKIFVCGPPGMYKAISGGKKSPSDQGELDGYLKELGYSKDQVYKF.

A helical transmembrane segment spans residues G28–Y50. Residues Q84–S189 enclose the FAD-binding FR-type domain. K192–L227 serves as a coordination point for FAD.

It belongs to the flavoprotein pyridine nucleotide cytochrome reductase family. The cofactor is FAD.

Its subcellular location is the mitochondrion outer membrane. The catalysed reaction is 2 Fe(III)-[cytochrome b5] + NADH = 2 Fe(II)-[cytochrome b5] + NAD(+) + H(+). Its function is as follows. May mediate the reduction of outer membrane cytochrome b5. This chain is NADH-cytochrome b5 reductase 2 (MCR1), found in Phaeosphaeria nodorum (strain SN15 / ATCC MYA-4574 / FGSC 10173) (Glume blotch fungus).